The following is a 431-amino-acid chain: tRNA(Ile)-lysidine synthase (431 aa).

Residue 25-30 (SGGPDS) participates in ATP binding.

This sequence belongs to the tRNA(Ile)-lysidine synthase family.

It is found in the cytoplasm. The enzyme catalyses cytidine(34) in tRNA(Ile2) + L-lysine + ATP = lysidine(34) in tRNA(Ile2) + AMP + diphosphate + H(+). Functionally, ligates lysine onto the cytidine present at position 34 of the AUA codon-specific tRNA(Ile) that contains the anticodon CAU, in an ATP-dependent manner. Cytidine is converted to lysidine, thus changing the amino acid specificity of the tRNA from methionine to isoleucine. This Lactobacillus gasseri (strain ATCC 33323 / DSM 20243 / BCRC 14619 / CIP 102991 / JCM 1131 / KCTC 3163 / NCIMB 11718 / NCTC 13722 / AM63) protein is tRNA(Ile)-lysidine synthase.